Consider the following 1858-residue polypeptide: Inactive histone-lysine N-methyltransferase 2E (1858 aa).

The short motif at aspartate 63–tyrosine 66 is the HCFC1-binding motif (HBM) element. The PHD-type zinc finger occupies valine 118 to arginine 166. Residues cysteine 121, cysteine 123, cysteine 135, cysteine 138, histidine 143, cysteine 146, cysteine 160, and cysteine 163 each contribute to the Zn(2+) site. Residues alanine 217 to serine 269 form a disordered region. The span at glycine 232–arginine 250 shows a compositional bias: basic and acidic residues. The 118-residue stretch at proline 330–aspartate 447 folds into the SET domain. An O-linked (GlcNAc) serine glycan is attached at serine 435. Residue threonine 440 is glycosylated (O-linked (GlcNAc) threonine). A disordered region spans residues serine 475 to leucine 530. Over residues lysine 494–threonine 504 the composition is skewed to basic and acidic residues. The segment covering glutamine 505 to methionine 520 has biased composition (polar residues). A coiled-coil region spans residues valine 559–glutamate 615. Serine 623 carries the post-translational modification Phosphoserine. Residues glutamate 630–threonine 687 are disordered. Residues asparagine 646 to threonine 670 are compositionally biased toward basic residues. Polar residues predominate over residues serine 672 to threonine 687. Phosphoserine occurs at positions 837 and 845. 2 stretches are compositionally biased toward low complexity: residues threonine 887–threonine 901 and proline 933–serine 957. Disordered regions lie at residues threonine 887–isoleucine 960 and leucine 1039–valine 1068. Basic and acidic residues predominate over residues leucine 1039–glutamate 1048. Polar residues predominate over residues proline 1049 to valine 1068. Phosphoserine is present on serine 1070. 2 disordered regions span residues lysine 1164–glutamine 1561 and valine 1581–glycine 1835. Composition is skewed to polar residues over residues proline 1186–glycine 1206 and threonine 1222–cysteine 1235. Serine 1273 carries the post-translational modification Phosphoserine. A compositionally biased stretch (basic and acidic residues) spans serine 1273–glycine 1282. 2 stretches are compositionally biased toward low complexity: residues serine 1285–serine 1303 and lysine 1349–serine 1362. Residue serine 1359 is modified to Phosphoserine. 2 stretches are compositionally biased toward polar residues: residues glutamine 1400–leucine 1432 and leucine 1506–threonine 1542. Residues alanine 1543–serine 1553 show a composition bias toward pro residues. Over residues valine 1581–valine 1599 the composition is skewed to polar residues. Residues valine 1626 to glycine 1637 show a composition bias toward pro residues. Residues glutamine 1642 to serine 1651 show a composition bias toward polar residues. The span at leucine 1677 to alanine 1687 shows a compositional bias: pro residues. The span at threonine 1698 to valine 1711 shows a compositional bias: polar residues. Over residues alanine 1714–serine 1724 the composition is skewed to pro residues. The span at glutamine 1798 to alanine 1808 shows a compositional bias: polar residues.

This sequence belongs to the class V-like SAM-binding methyltransferase superfamily. Histone-lysine methyltransferase family. TRX/MLL subfamily. Component of a complex composed of KMT2E (isoform 3), OGT and USP7; the complex stabilizes KMT2E, preventing KMT2E ubiquitination and proteasomal-mediated degradation. Isoform 3 interacts (via N-terminus) with OGT (via TRP repeats). Isoform 3 interacts with deubiquitinating enzyme USP7 (via MATH domain). Isoform 3 interacts (via HBM motif) with HCFC1 (via Kelch domain). Isoform 3 interacts with E2F1; the interaction is probably indirect and is mediated via HCFC1. Post-translationally, ubiquitinated. Deubiquitinated by USP7. O-glycosylated at Ser-435 and Thr-440 in the SET domain by OGT which probably prevents KMT2E proteasomal-mediated degradation. As to expression, widely expressed in both adult and fetal tissues. Highest levels of expression observed in fetal thymus and kidney and in adult hematopoietic tissues, jejunum and cerebellum. Isoform NKp44L: Not detected on circulating cells from healthy individuals, but is expressed on a large panel of tumor and transformed cells.

The protein resides in the chromosome. The protein localises to the cytoplasm. It is found in the cytoskeleton. Its subcellular location is the microtubule organizing center. It localises to the centrosome. The protein resides in the nucleus speckle. The protein localises to the nucleus. It is found in the nucleoplasm. Its subcellular location is the cell membrane. Functionally, associates with chromatin regions downstream of transcriptional start sites of active genes and thus regulates gene transcription. Chromatin interaction is mediated via the binding to tri-methylated histone H3 at 'Lys-4' (H3K4me3). Key regulator of hematopoiesis involved in terminal myeloid differentiation and in the regulation of hematopoietic stem cell (HSCs) self-renewal by a mechanism that involves DNA methylation. Also acts as an important cell cycle regulator, participating in cell cycle regulatory network machinery at multiple cell cycle stages including G1/S transition, S phase progression and mitotic entry. Recruited to E2F1 responsive promoters by HCFC1 where it stimulates tri-methylation of histone H3 at 'Lys-4' and transcriptional activation and thereby facilitates G1 to S phase transition. During myoblast differentiation, required to suppress inappropriate expression of S-phase-promoting genes and maintain expression of determination genes in quiescent cells. Cellular ligand for NCR2/NKp44, may play a role as a danger signal in cytotoxicity and NK-cell-mediated innate immunity. The protein is Inactive histone-lysine N-methyltransferase 2E (KMT2E) of Homo sapiens (Human).